Here is a 185-residue protein sequence, read N- to C-terminus: p53 apoptosis effector related to PMP-22 (185 aa).

Transmembrane regions (helical) follow at residues 13 to 33 (WILPMLLLFAIIFDIIAIAAQ), 74 to 94 (VAALMIIGLIILIFAFIISLV), 105 to 125 (LPFIGLLLILAVIVQIIALII), and 143 to 163 (WAYGFGWGATILTLGCAILFC).

This sequence belongs to the TMEM47 family.

Its subcellular location is the cell junction. The protein localises to the desmosome. It is found in the cell membrane. It localises to the cytoplasm. Component of intercellular desmosome junctions. Positively regulates apoptosis in the early-stage embryo in response to UV irradiation, this is partially dependent on tp53 activation. Required for the survival of cell populations in the developing notochord and skin, therefore required for normal embryogenesis beyond 30 hpf. Acts as a positive regulator of endothelial cell apoptosis in response to blood flow-derived shear stress. This is p53 apoptosis effector related to PMP-22 from Danio rerio (Zebrafish).